A 203-amino-acid chain; its full sequence is Small ribosomal subunit protein uS4 (203 aa).

The 61-residue stretch at arginine 93 to lysine 153 folds into the S4 RNA-binding domain.

This sequence belongs to the universal ribosomal protein uS4 family. Part of the 30S ribosomal subunit. Contacts protein S5. The interaction surface between S4 and S5 is involved in control of translational fidelity.

One of the primary rRNA binding proteins, it binds directly to 16S rRNA where it nucleates assembly of the body of the 30S subunit. In terms of biological role, with S5 and S12 plays an important role in translational accuracy. In Lactobacillus delbrueckii subsp. bulgaricus (strain ATCC 11842 / DSM 20081 / BCRC 10696 / JCM 1002 / NBRC 13953 / NCIMB 11778 / NCTC 12712 / WDCM 00102 / Lb 14), this protein is Small ribosomal subunit protein uS4.